Reading from the N-terminus, the 259-residue chain is MGAGNFLTALEVPVAALAGAASDRRASCERVSPPPPLPHFRLPPLPRSRLPGPVSRPEPGAPLLGCWLQWGAPSPGPLCLLFRLCSCTCFAPLPAGADMDPNPRAALERQQLRLRERQKFFEDILQPETEFVFPLSHLHLESQRPPIGSISSMEVNVDTLEQVELIDLGDPDAADVFLPCEDPPPTPQSSGMDNHLEELSLPVPTSDRTTSRTSSSSSSDSSTNLHSPNPSDDGADTPLAQSDEEEERGDGGAEPGACS.

2 disordered regions span residues 27–56 (SCER…PVSR) and 174–259 (ADVF…GACS). A compositionally biased stretch (pro residues) spans 32–46 (SPPPPLPHFRLPPLP). A compositionally biased stretch (low complexity) spans 205–223 (TSDRTTSRTSSSSSSDSST). Ser217 and Ser218 each carry phosphoserine. Residue Thr237 is modified to Phosphothreonine. Ser242 carries the phosphoserine modification.

The protein belongs to the dysbindin family. In terms of assembly, monomer. Interacts with CSNK1D and CSNK1E. As to expression, detected in brain.

Functionally, may modulate the activity of casein kinase-1. Inhibits CSNK1D autophosphorylation (in vitro). The chain is Dysbindin domain-containing protein 2 (DBNDD2) from Homo sapiens (Human).